The primary structure comprises 471 residues: Anthranilate 1,2-dioxygenase large subunit (471 aa).

The Rieske domain maps to 52 to 160 (IYACHESEIP…IASYRGFVFV (109 aa)). Residues Cys93, His95, Cys113, and His116 each contribute to the [2Fe-2S] cluster site. The Fe cation site is built by His220, His225, and Asp379.

Belongs to the bacterial ring-hydroxylating dioxygenase alpha subunit family. In terms of assembly, the anthranilate dioxygenase (AntDO) multicomponent enzyme system is composed of an oxygenase component and a NADH:acceptor reductase component (AntC). The oxygenase component is a heterohexamer of 3 large (AntA) and 3 small (AntB) subunits. It depends on Fe cation as a cofactor. [2Fe-2S] cluster serves as cofactor.

It carries out the reaction anthranilate + NADH + O2 + 3 H(+) = catechol + NH4(+) + CO2 + NAD(+). The enzyme catalyses anthranilate + NADPH + O2 + 3 H(+) = catechol + NH4(+) + CO2 + NADP(+). Its pathway is aromatic compound metabolism; anthranilate degradation via hydroxylation; catechol from anthranilate: step 1/1. Functionally, component of anthranilate dioxygenase multicomponent enzyme system which catalyzes the incorporation of both atoms of molecular oxygen into anthranilate to form catechol. The sequence is that of Anthranilate 1,2-dioxygenase large subunit from Acinetobacter baylyi (strain ATCC 33305 / BD413 / ADP1).